A 1087-amino-acid polypeptide reads, in one-letter code: Formin-H (1087 aa).

The span at 1 to 23 (MSFDLESNSSGGSTIGRNSSIRL) shows a compositional bias: polar residues. Positions 1-25 (MSFDLESNSSGGSTIGRNSSIRLSS) are disordered. The GBD/FH3 domain maps to 34–394 (VSLNEIIDLD…QLEDELKIHP (361 aa)). 2 stretches are compositionally biased toward low complexity: residues 416–436 (FGFG…SMAK) and 549–558 (SPGSTLSPSP). Disordered regions lie at residues 416–445 (FGFG…DNEE), 549–625 (SPGS…PAKP), and 1048–1087 (VDSL…QLKK). The stretch at 433-461 (SMAKTELKKDNEEKQKTIEHLLKQLNKFS) forms a coiled coil. Residues 569-588 (FGITSSSIHTSTDKLTNSTE) show a composition bias toward polar residues. Positions 589-615 (PILGSPPPPPPPPMSGGGGPPPPPPPP) constitute an FH1 domain. The span at 592 to 616 (GSPPPPPPPPMSGGGGPPPPPPPPG) shows a compositional bias: pro residues. In terms of domain architecture, FH2 spans 623 to 1016 (AKPIIKPSVK…ENSKMEDPEK (394 aa)). The 39-residue stretch at 1013 to 1051 (DPEKGGLQDLSSQIRSGQLFKDRRVGDSVIAQMQNVDSL) folds into the DAD domain.

Belongs to the formin homology family. Diaphanous subfamily. In terms of assembly, interacts with vasP, proB/profilin-2 and rac1A. Interacts (via GBD/FH3 domain) with activated Rho-GTPases.

It localises to the cytoplasm. The protein localises to the cell cortex. The protein resides in the cytoskeleton. In terms of biological role, formins play an important role in the nucleation of actin and the formation of linear actin filaments. Important for cell migration and formation, elongation and maintenance of filopodia. Specifically controls filopodial dynamics by regulating actin turnover at the barbed ends of actin filaments. The chain is Formin-H (forH) from Dictyostelium discoideum (Social amoeba).